The primary structure comprises 213 residues: Small ribosomal subunit protein uS3 (213 aa).

Positions 38 to 106 constitute a KH type-2 domain; sequence IRAFVKKLLY…EFSLEVNEIR (69 aa).

It belongs to the universal ribosomal protein uS3 family. Part of the 30S ribosomal subunit. Forms a tight complex with proteins S10 and S14.

Functionally, binds the lower part of the 30S subunit head. Binds mRNA in the 70S ribosome, positioning it for translation. The polypeptide is Small ribosomal subunit protein uS3 (Desulfovibrio desulfuricans (strain ATCC 27774 / DSM 6949 / MB)).